Reading from the N-terminus, the 160-residue chain is Phosphopantetheine adenylyltransferase (160 aa).

Residue Thr10 participates in substrate binding. ATP contacts are provided by residues Thr10–Phe11 and His18. The substrate site is built by Lys42, Leu74, and Arg88. ATP is bound by residues Gly89–Arg91, Glu99, and Asn124–Thr130.

It belongs to the bacterial CoaD family. In terms of assembly, homohexamer. Requires Mg(2+) as cofactor.

It localises to the cytoplasm. The catalysed reaction is (R)-4'-phosphopantetheine + ATP + H(+) = 3'-dephospho-CoA + diphosphate. The protein operates within cofactor biosynthesis; coenzyme A biosynthesis; CoA from (R)-pantothenate: step 4/5. In terms of biological role, reversibly transfers an adenylyl group from ATP to 4'-phosphopantetheine, yielding dephospho-CoA (dPCoA) and pyrophosphate. This Aeromonas salmonicida (strain A449) protein is Phosphopantetheine adenylyltransferase.